We begin with the raw amino-acid sequence, 329 residues long: MSELVTLKTYLGTWAGADTGRTAVAQAVTAIAEAGVGIADLVARGPLEEGLASIRGVDPNAGGDAQKELDVVAEERIKAALLPTPTAFLASEESEELIPLNPDGRLVIAVDPLDGSSNIDTNVSVGTIYSILPYDAAVHTDPVSAVMRPGVNQVASGFLAYGPATILVATFGEGTQVFVHDRQTGEFVLARTNVEIPAETKEYGVNQSNVRHWAEPMSAYIADCLAGKDGPRGKDFNMRWVGSMVADAFRIFTRGGVYVYPGDKRKGYENGRLRLIYEANPVAFLTEQAKGAATDGKTRILDIQPHHIHQRIPLVFGSKAEVEKIASYY.

Residues Glu92, Asp111, Leu113, and Asp114 each coordinate Mg(2+). Substrate contacts are provided by residues 114–117 (DGSS) and Asn206. Residue Glu278 participates in Mg(2+) binding.

Belongs to the FBPase class 1 family. Homotetramer. The cofactor is Mg(2+).

It localises to the cytoplasm. The enzyme catalyses beta-D-fructose 1,6-bisphosphate + H2O = beta-D-fructose 6-phosphate + phosphate. It participates in carbohydrate biosynthesis; gluconeogenesis. This chain is Fructose-1,6-bisphosphatase class 1 2, found in Xanthobacter autotrophicus (strain ATCC BAA-1158 / Py2).